Here is a 319-residue protein sequence, read N- to C-terminus: Protease HtpX homolog (319 aa).

Helical transmembrane passes span 3 to 23 (LTVL…AWAL) and 32 to 52 (TGVA…QWLF). His-134 is a binding site for Zn(2+). Glu-135 is an active-site residue. A Zn(2+)-binding site is contributed by His-138. 2 consecutive transmembrane segments (helical) span residues 146–166 (VILA…TLVW) and 182–202 (MALV…QLIV). Glu-210 contributes to the Zn(2+) binding site.

It belongs to the peptidase M48B family. Zn(2+) serves as cofactor.

The protein localises to the cell membrane. In Aeropyrum pernix (strain ATCC 700893 / DSM 11879 / JCM 9820 / NBRC 100138 / K1), this protein is Protease HtpX homolog.